We begin with the raw amino-acid sequence, 260 residues long: 14-3-3 protein 4 (260 aa).

The segment at 238–260 is disordered; it reads DNADDVGDDIKEASKPESGEGQQ. Over residues 245–260 the composition is skewed to basic and acidic residues; sequence DDIKEASKPESGEGQQ.

The protein belongs to the 14-3-3 family. In terms of assembly, homodimer.

The sequence is that of 14-3-3 protein 4 (TFT4) from Solanum lycopersicum (Tomato).